A 547-amino-acid chain; its full sequence is CTP synthase (547 aa).

The interval 1 to 267 (MKTKFIFITG…DQKIAIMLRL (267 aa)) is amidoligase domain. A CTP-binding site is contributed by S14. Residue S14 participates in UTP binding. ATP-binding positions include 15–20 (SLGKGL) and D72. Residues D72 and E141 each contribute to the Mg(2+) site. CTP-binding positions include 148–150 (DIE), 188–193 (KTKPTQ), and K224. UTP contacts are provided by residues 188–193 (KTKPTQ) and K224. A Glutamine amidotransferase type-1 domain is found at 292–545 (TIGIVGKYVD…IRAAKTHPAG (254 aa)). G354 is a binding site for L-glutamine. The active-site Nucleophile; for glutamine hydrolysis is the C381. L-glutamine-binding positions include 382-385 (LGMQ), E405, and R473. Catalysis depends on residues H518 and E520.

This sequence belongs to the CTP synthase family. As to quaternary structure, homotetramer.

It carries out the reaction UTP + L-glutamine + ATP + H2O = CTP + L-glutamate + ADP + phosphate + 2 H(+). It catalyses the reaction L-glutamine + H2O = L-glutamate + NH4(+). The enzyme catalyses UTP + NH4(+) + ATP = CTP + ADP + phosphate + 2 H(+). Its pathway is pyrimidine metabolism; CTP biosynthesis via de novo pathway; CTP from UDP: step 2/2. Allosterically activated by GTP, when glutamine is the substrate; GTP has no effect on the reaction when ammonia is the substrate. The allosteric effector GTP functions by stabilizing the protein conformation that binds the tetrahedral intermediate(s) formed during glutamine hydrolysis. Inhibited by the product CTP, via allosteric rather than competitive inhibition. In terms of biological role, catalyzes the ATP-dependent amination of UTP to CTP with either L-glutamine or ammonia as the source of nitrogen. Regulates intracellular CTP levels through interactions with the four ribonucleotide triphosphates. The polypeptide is CTP synthase (Nitratidesulfovibrio vulgaris (strain DP4) (Desulfovibrio vulgaris)).